The chain runs to 256 residues: Tryptophan synthase alpha chain (256 aa).

Active-site proton acceptor residues include Glu46 and Asp57.

Belongs to the TrpA family. In terms of assembly, tetramer of two alpha and two beta chains.

It catalyses the reaction (1S,2R)-1-C-(indol-3-yl)glycerol 3-phosphate + L-serine = D-glyceraldehyde 3-phosphate + L-tryptophan + H2O. It functions in the pathway amino-acid biosynthesis; L-tryptophan biosynthesis; L-tryptophan from chorismate: step 5/5. In terms of biological role, the alpha subunit is responsible for the aldol cleavage of indoleglycerol phosphate to indole and glyceraldehyde 3-phosphate. The polypeptide is Tryptophan synthase alpha chain (Bacteroides thetaiotaomicron (strain ATCC 29148 / DSM 2079 / JCM 5827 / CCUG 10774 / NCTC 10582 / VPI-5482 / E50)).